The primary structure comprises 902 residues: Protein translocase subunit SecA (902 aa).

Residues Q87, 105–109, and D512 each bind ATP; that span reads GEGKT. Positions 836–902 are disordered; sequence DVEKVEEQHR…KFKQCCGKLK (67 aa). Positions 840 to 863 are enriched in basic and acidic residues; it reads VEEQHRKSENAPREYQHEEVEHVG. Residues C886, C888, C897, and C898 each contribute to the Zn(2+) site.

Belongs to the SecA family. As to quaternary structure, monomer and homodimer. Part of the essential Sec protein translocation apparatus which comprises SecA, SecYEG and auxiliary proteins SecDF-YajC and YidC. The cofactor is Zn(2+).

The protein resides in the cell inner membrane. It localises to the cytoplasm. It carries out the reaction ATP + H2O + cellular proteinSide 1 = ADP + phosphate + cellular proteinSide 2.. Its function is as follows. Part of the Sec protein translocase complex. Interacts with the SecYEG preprotein conducting channel. Has a central role in coupling the hydrolysis of ATP to the transfer of proteins into and across the cell membrane, serving both as a receptor for the preprotein-SecB complex and as an ATP-driven molecular motor driving the stepwise translocation of polypeptide chains across the membrane. The polypeptide is Protein translocase subunit SecA (Pseudoalteromonas translucida (strain TAC 125)).